The following is a 583-amino-acid chain: NEDD4-binding protein 2-like 2 (583 aa).

Residues asparagine 162–glutamate 197 are a coiled coil. The segment at glutamate 549–asparagine 575 is disordered.

The sequence is that of NEDD4-binding protein 2-like 2 (N4BP2L2) from Homo sapiens (Human).